The primary structure comprises 83 residues: MDTRVIAVLFVAIMVLSSTNALPKQKGSYKNMNHADFLKGLDRASSKRDCRDSHWSCFFQSNYEDICSTAQAEECALSCGLCE.

Positions 1–21 (MDTRVIAVLFVAIMVLSSTNA) are cleaved as a signal peptide. A propeptide spanning residues 22-48 (LPKQKGSYKNMNHADFLKGLDRASSKR) is cleaved from the precursor. Cystine bridges form between C50–C82, C57–C75, and C67–C79. Residues 50–83 (CRDSHWSCFFQSNYEDICSTAQAEECALSCGLCE) enclose the ShKT domain.

Contains 3 disulfide bonds. As to expression, expressed in various neurons (ectodermal sensory cells) (in planulae and primary polyps). Not expressed in nematocytes.

Functionally, probable neuropeptide. This Nematostella vectensis (Starlet sea anemone) protein is Protein ShK-like4.